Reading from the N-terminus, the 329-residue chain is GTPase Obg (329 aa).

The 159-residue stretch at 1-159 folds into the Obg domain; it reads MQFIDQAIID…WSLQLELKLL (159 aa). The OBG-type G domain maps to 160–328; the sequence is AEVGIIGLPN…LLSSIWNELG (169 aa). ATP-binding positions include 166 to 173, 191 to 195, 213 to 216, 280 to 283, and 309 to 311; these read GLPNAGKS, FTTLI, DIPG, NKKE, and SAV. Ser173 and Thr193 together coordinate Mg(2+).

This sequence belongs to the TRAFAC class OBG-HflX-like GTPase superfamily. OBG GTPase family. Monomer. It depends on Mg(2+) as a cofactor.

The protein localises to the cytoplasm. An essential GTPase which binds GTP, GDP and possibly (p)ppGpp with moderate affinity, with high nucleotide exchange rates and a fairly low GTP hydrolysis rate. Plays a role in control of the cell cycle, stress response, ribosome biogenesis and in those bacteria that undergo differentiation, in morphogenesis control. The protein is GTPase Obg of Prochlorococcus marinus (strain NATL2A).